The sequence spans 223 residues: Imidazoleglycerol-phosphate dehydratase (223 aa).

This sequence belongs to the imidazoleglycerol-phosphate dehydratase family.

The enzyme catalyses D-erythro-1-(imidazol-4-yl)glycerol 3-phosphate = 3-(imidazol-4-yl)-2-oxopropyl phosphate + H2O. It functions in the pathway amino-acid biosynthesis; L-histidine biosynthesis; L-histidine from 5-phospho-alpha-D-ribose 1-diphosphate: step 6/9. This is Imidazoleglycerol-phosphate dehydratase (HIS3) from Candida albicans (Yeast).